The following is a 361-amino-acid chain: tRNA 2-selenouridine synthase (361 aa).

The Rhodanese domain maps to 11 to 134 (LIADTPLIDV…LRQTAIQATW (124 aa)). The S-selanylcysteine intermediate role is filled by Cys-94.

It belongs to the SelU family. Monomer.

It catalyses the reaction 5-methylaminomethyl-2-thiouridine(34) in tRNA + selenophosphate + (2E)-geranyl diphosphate + H2O + H(+) = 5-methylaminomethyl-2-selenouridine(34) in tRNA + (2E)-thiogeraniol + phosphate + diphosphate. It carries out the reaction 5-methylaminomethyl-2-thiouridine(34) in tRNA + (2E)-geranyl diphosphate = 5-methylaminomethyl-S-(2E)-geranyl-thiouridine(34) in tRNA + diphosphate. The catalysed reaction is 5-methylaminomethyl-S-(2E)-geranyl-thiouridine(34) in tRNA + selenophosphate + H(+) = 5-methylaminomethyl-2-(Se-phospho)selenouridine(34) in tRNA + (2E)-thiogeraniol. The enzyme catalyses 5-methylaminomethyl-2-(Se-phospho)selenouridine(34) in tRNA + H2O = 5-methylaminomethyl-2-selenouridine(34) in tRNA + phosphate. Functionally, involved in the post-transcriptional modification of the uridine at the wobble position (U34) of tRNA(Lys), tRNA(Glu) and tRNA(Gln). Catalyzes the conversion of 2-thiouridine (S2U-RNA) to 2-selenouridine (Se2U-RNA). Acts in a two-step process involving geranylation of 2-thiouridine (S2U) to S-geranyl-2-thiouridine (geS2U) and subsequent selenation of the latter derivative to 2-selenouridine (Se2U) in the tRNA chain. In Salmonella arizonae (strain ATCC BAA-731 / CDC346-86 / RSK2980), this protein is tRNA 2-selenouridine synthase.